Here is a 283-residue protein sequence, read N- to C-terminus: Pantothenate synthetase (283 aa).

31–38 contributes to the ATP binding site; the sequence is MGALHDGH. His-38 functions as the Proton donor in the catalytic mechanism. A (R)-pantoate-binding site is contributed by Gln-62. Gln-62 lines the beta-alanine pocket. ATP is bound at residue 148–151; sequence GKKD. Gln-154 serves as a coordination point for (R)-pantoate. Residues Val-177 and 185-188 each bind ATP; that span reads KSSR.

This sequence belongs to the pantothenate synthetase family. Homodimer.

It localises to the cytoplasm. It catalyses the reaction (R)-pantoate + beta-alanine + ATP = (R)-pantothenate + AMP + diphosphate + H(+). It participates in cofactor biosynthesis; (R)-pantothenate biosynthesis; (R)-pantothenate from (R)-pantoate and beta-alanine: step 1/1. Its function is as follows. Catalyzes the condensation of pantoate with beta-alanine in an ATP-dependent reaction via a pantoyl-adenylate intermediate. This chain is Pantothenate synthetase, found in Staphylococcus aureus (strain MSSA476).